The following is a 1997-amino-acid chain: QEQHSQLEAAKTQVEKDMGEKISNLERELENANDLLCSTKRKGVMLSEEELTAMSPTAAAVAKVVKPGMKLTELYNAYVETQDKLLMEKQENKRITKYLDEIVKEVEAKSPILKRQREEYERMQKTVASLSAKLEQAMREIQRMQDETDKANKCSSVLERENQRLELQIKDLSQQIRVLLMELEEARGNFVQRDDVSSANISSSSEVITQHLVTYRNIEELQQQNQRLLVALRELGEAKEREEQESTSSRVSELEKELENALSELQQLREARSHQMTLVESIVRQRDMYRILLSQTTGVVLPAQDETALTSTPRKSPGVSLDGSTSTPAAVVVSDSTEAAEARAALKQLQEVFENYRKEKAENDRMLNEQHDKLQEQVTELRSQNTKISTQLEFASKRYEMLQDNVEGYRREITALQEKTQKLSATTQKQEQIINTLTHDLRAANEKLAVAEVRAENLKREKELLKMSEVRLTQERESLVAEQRGQNLLLTNLQTIQVTLERSETEIKQRYNNQIEKLEQELAQTKKKLEHEIEQRHLLGKNQDVQVLELKKQYEMELNLHNNTKELLKNSHKEISVLKQQLNSFELQLASRSSQQAANRDKDVNIEDVEEIKTKLRQSEELVNDLKERLKTATSNVEQYRSVVLNLEESLNKEKQVTEEVRKTIEVRLKESSEYQSQLEKKMMESEKEKQELRDEKHKTVEQMEQQVTQLRQSLSSLQAEVQQALQRATTSASNEQKAKQDCQEQARIAAEAQNKYERELMLHAADVEALQAAKKQLTSASAIRHKCEETAQKAGSQLLESRASWEERERMLKEEVSQIQSRCKDLEKQNGLLHEQIESLSKKMVTSVQEGALNMSFGEEGKSQEQVMEILRFVRREKEIAEARFEVAQVECLRYRQRIEHMERELHELQDSLNAEREKVQVTAKTMAQHEELMKKTETMNVLIESNKILREENEKQEQELQQLQAKIRKLESNILPLQESNAELSEKSGMLQAEKKLLEEDVRRWRARTQHLLSQQKDTDAEEYKKLLSEREVNTKRIQQLTEETGKLKTEVARTNASLNTCQSQLQSVKDDLTKIKAEKEKLQKELDAKILDIQEKIKTITQVKKIGRRYKTQYEELKVTHDKMVAEASSAKADQLQEQASQKEVQELKDSLQRSEAKVTTMQTTVDNMQKTLDDKDNEIKEHQEQISRMQAELSHLHKDLQDKTAQEEQMRQQINEKEEKTKKTLLVVRQKLAQNNGAKEQLTRENEDLKQKNANLEQQKEELEVRMSALRSQYDGRISRLERELREQQERHHEQRDEPQETTRIPQQRQITLQPTTAAGERGSANTSEPPTANIKPTPSKVTTAAVPVNKSTPRASIRPMVTPAAVSTPTSTPTATVMPTTQVDQQEVQSEGQMEHVPVFGSASGSVRSTSPNVQSSLPQPILTLQQQTQTTAFVQPTQQSHATIESPTQETPVEIVQSSPVERPTTSSTFGTYSATPSSSIPKRPREEEEDSTIETPEQIADDTDQQRTKKRKEEDIEEKTETEAVINTEDALHILTQCSNMEFPLEEEIVESPIQTSQVIESQAPEQLQNVQSTQDSLQDTPPKKTHNLVIVISDEENEDEQEGYEEEEQEDEEEDEDDAGIGEGDDSNEETGSADGNEDYEGDDAEEADGTDPDTETEDSMTAGEGNQRAADSQNIGDSGVVTAESTFSQETREQPSSASDRQGPRPPQSPRRQAHPPRLTILAPPQELGPPPAQRIPVARRQSVGRGLQLTPGVGGMQHFFDEEDRTVPSTPTLVVPHRTDGFAEAIHSPQVAGVPRFRFGPPEDMPQASSSHSDLGQLASQGGLGMYDTPLFLAHEEESGGRSVPTTPLQVAAPVSVFAENPAADTSDHASQSVPMVTTSTGNVPTSVDSGAADEGDEVFVEAESEGIGAESTLEMDTQQEEPVQPSEADLPSTSQDPPSSSIADTSSSKPKPRRVWLQPQPGGRPFKRSRGGSDFRGRGGINRSNI.

Coiled coils occupy residues 1-36 (QEQH…NDLL), 101-277 (EIVK…HQMT), 335-1103 (DSTE…IKTI), and 1129-1305 (AEAS…EPQE). 2 stretches are compositionally biased toward basic and acidic residues: residues 672 to 702 (SSEY…KTVE) and 1290 to 1305 (REQQ…EPQE). Disordered regions lie at residues 672–706 (SSEY…QMEQ), 1290–1352 (REQQ…AAVP), 1438–1529 (AFVQ…KTET), 1561–1752 (IQTS…RRQS), 1795–1832 (AIHS…ASQG), and 1870–1997 (ENPA…RSNI). 3 stretches are compositionally biased toward polar residues: residues 1306–1321 (TTRI…QPTT), 1328–1347 (SANT…SKVT), and 1446–1487 (SHAT…SSSI). Residues 1511 to 1529 (DQQRTKKRKEEDIEEKTET) show a composition bias toward basic and acidic residues. The segment covering 1561-1587 (IQTSQVIESQAPEQLQNVQSTQDSLQD) has biased composition (polar residues). Acidic residues-rich tracts occupy residues 1601 to 1637 (SDEE…DSNE) and 1644 to 1667 (GNED…ETED). 3 stretches are compositionally biased toward polar residues: residues 1692-1709 (AEST…SASD), 1817-1830 (QASS…QLAS), and 1879-1899 (HASQ…TSVD). The span at 1902–1915 (AADEGDEVFVEAES) shows a compositional bias: acidic residues. Low complexity predominate over residues 1950–1959 (SSSIADTSSS).

This sequence belongs to the TPR family. In terms of assembly, homodimer. Part of the nuclear pore complex (NPC). Interacts with nuclear receptor KPNB1; the interaction occurs in a RanGTP-dependent manner. Associates with the Importin alpha/Importin beta receptor. As to expression, expressed in epithelial cells, oocytes and egg (at protein level).

Its subcellular location is the nucleus. The protein resides in the nucleus membrane. It is found in the nucleus envelope. It localises to the nuclear pore complex. The protein localises to the cytoplasm. Its subcellular location is the cytoskeleton. The protein resides in the spindle. It is found in the chromosome. It localises to the centromere. The protein localises to the kinetochore. Functionally, component of the nuclear pore complex (NPC), a complex required for the trafficking across the nuclear envelope. Functions as a scaffolding element in the nuclear phase of the NPC essential for normal nucleocytoplasmic transport of proteins and mRNAs, plays a role in the establishment of nuclear-peripheral chromatin compartmentalization in interphase, and in the mitotic spindle checkpoint signaling during mitosis. Involved in the quality control and retention of unspliced mRNAs in the nucleus. Implicated in nuclear export of mRNAs transcribed from heat shock gene promoters. May play a limited role in the regulation of nuclear protein export. May be involved in the formation and/or maintenance of NPC-associated perinuclear heterochromatin exclusion zones (HEZs). Finally, may act as a spatial regulator of the spindle-assembly checkpoint (SAC) response. The sequence is that of Nucleoprotein TPR from Xenopus laevis (African clawed frog).